Consider the following 1012-residue polypeptide: MTEAKTGTGNERLVVEIVGAHNLMPKDGEDSSSPFVEVQFENQRLRTKVKPKDLNPIWNEKLVFHVIDVNDLRHKALEINVYNEKRSSNSRNFLGKVRVLGSSVGREGESVVQLYTLEKRSLFSSVRGEISVKHYMTTTAENGENVRRVNRSGGSKKSKKVQNVSSSMAIQQQQQQQQQQISLHNHNRGNQQQSQQNGQGQRMLPFYPHQSEIKPLVITALPSPMPGPGPRPIVYSNGSSEFSLKETKPCLGGTSNGLGGLSSHKDKTSSTYDLVEQMQYLYVNIVKAKDLSVLGEVVSEVKLGNYRGVTKKVSSNSSNPEWNQVFVFSKERIQSSVVELFVKEGNKDEYTGRVLFDLSEIPTRVPPDSPLAPQWYKIENRNGGRGNGELMVSVWFGTQADEAFAEAWHSKAGNVHIEELSSIKSKVYLSPKLWYLRISVIEAQDVAIMDKGSSLMRFPELSAKLQVGSQILRTAIASAIPTKSFSNPYWNEDLMFVVAEPFEDCVTVVVEDRLNGGAIGGQNDVAVGRVQIPISAVERRTGDTLVGSRWFSLDNGNNNNRFGSRIHLRLSLDGGYHVLDEATMYNSDVRPTAKELWKPQVGLLEIGILSATGLMPMKVRDGKCGGIADSYCVAKYGPKWVRTRTVVDSLCPKWNEQYTWEVYDPCTVVTVGVFDNARVNENNNSRDVRIGKVRIRLSTLETGRVYTHSYPLIVLHPSGVKKTGELHLAVRLSCGNAVNMLHMYALPLLPKMHYTQPLGVHMLERLRYQTLNAVAARLSRAEPPLGREVVEYMLDHDFHVWSMRRSKANFFRLVNVISGLVAVAKLVEVMRSWSKPVYSTVFVLAFLFMVLFPELLLPCLLLYTAAVGVWRFRRRSRYPPHMDARISHAETVFPDELDEEFDTFPTSRGFDVVRMRYDRVRSIAGRVQTVVGDMASQGERVQALLSWRDPRATFLFLMFCLLAAVGFYTVPVKLTVAISGLYYLRPPRFRRKLPSRGLSFFRRLPSRADSLL.

The C2 1 domain maps to 1–115 (MTEAKTGTGN…REGESVVQLY (115 aa)). Residues 141–203 (ENGENVRRVN…SQQNGQGQRM (63 aa)) are disordered. Residues 148 to 160 (RVNRSGGSKKSKK) are compositionally biased toward basic residues. Composition is skewed to low complexity over residues 161 to 180 (VQNV…QQQQ) and 188 to 202 (RGNQ…QGQR). C2 domains lie at 262-376 (SSHK…PQWY), 411-551 (KAGN…SRWF), and 585-710 (YNSD…THSY). Ca(2+) is bound by residues Glu-296, Glu-344, Asn-346, and Glu-349. Transmembrane regions (helical) follow at residues 810–830 (FFRL…VEVM), 841–861 (VFVL…PCLL), and 952–972 (ATFL…TVPV).

The protein belongs to the MCTP family. Ca(2+) is required as a cofactor. In terms of tissue distribution, highly expressed in roots meristems, shoot apical meristems (SAMs) and in incipient leaf primordia. Observed in flowers.

It localises to the endoplasmic reticulum membrane. Functionally, may function as a signaling molecule by regulating the trafficking of other regulators. This Arabidopsis thaliana (Mouse-ear cress) protein is Multiple C2 domain and transmembrane region protein 10.